The following is an 868-amino-acid chain: Translation initiation factor IF-2 (868 aa).

Disordered stretches follow at residues 49 to 72 (LSKQ…TSTL) and 92 to 276 (KRSD…EHLK). The segment covering 92 to 240 (KRSDIEEQQR…KKAEAEEVHL (149 aa)) has biased composition (basic and acidic residues). Residues 368-537 (SRAPVVTIMG…VLQSELLDLQ (170 aa)) enclose the tr-type G domain. A G1 region spans residues 377–384 (GHVDHGKT). GTP is bound at residue 377-384 (GHVDHGKT). Positions 402 to 406 (GITQH) are G2. The G3 stretch occupies residues 423–426 (DTPG). Residues 423-427 (DTPGH) and 477-480 (NKMD) contribute to the GTP site. Residues 477-480 (NKMD) form a G4 region. The G5 stretch occupies residues 513–515 (SAK).

It belongs to the TRAFAC class translation factor GTPase superfamily. Classic translation factor GTPase family. IF-2 subfamily.

The protein localises to the cytoplasm. In terms of biological role, one of the essential components for the initiation of protein synthesis. Protects formylmethionyl-tRNA from spontaneous hydrolysis and promotes its binding to the 30S ribosomal subunits. Also involved in the hydrolysis of GTP during the formation of the 70S ribosomal complex. In Alteromonas mediterranea (strain DSM 17117 / CIP 110805 / LMG 28347 / Deep ecotype), this protein is Translation initiation factor IF-2.